The following is a 98-amino-acid chain: Co-chaperonin GroES (98 aa).

Belongs to the GroES chaperonin family. Heptamer of 7 subunits arranged in a ring. Interacts with the chaperonin GroEL.

It is found in the cytoplasm. Functionally, together with the chaperonin GroEL, plays an essential role in assisting protein folding. The GroEL-GroES system forms a nano-cage that allows encapsulation of the non-native substrate proteins and provides a physical environment optimized to promote and accelerate protein folding. GroES binds to the apical surface of the GroEL ring, thereby capping the opening of the GroEL channel. The polypeptide is Co-chaperonin GroES (Neorickettsia sennetsu (strain ATCC VR-367 / Miyayama) (Ehrlichia sennetsu)).